Reading from the N-terminus, the 145-residue chain is Ribosome-binding factor A (145 aa).

The span at 122–132 (KVQRDLESAPR) shows a compositional bias: basic and acidic residues. The interval 122-145 (KVQRDLESAPREDDEGEPDSSSRD) is disordered.

It belongs to the RbfA family. Monomer. Binds 30S ribosomal subunits, but not 50S ribosomal subunits or 70S ribosomes.

Its subcellular location is the cytoplasm. In terms of biological role, one of several proteins that assist in the late maturation steps of the functional core of the 30S ribosomal subunit. Associates with free 30S ribosomal subunits (but not with 30S subunits that are part of 70S ribosomes or polysomes). Required for efficient processing of 16S rRNA. May interact with the 5'-terminal helix region of 16S rRNA. This Methylorubrum extorquens (strain PA1) (Methylobacterium extorquens) protein is Ribosome-binding factor A.